We begin with the raw amino-acid sequence, 353 residues long: Protein RecA (353 aa).

73-80 (GPESSGKT) contributes to the ATP binding site.

It belongs to the RecA family.

The protein localises to the cytoplasm. In terms of biological role, can catalyze the hydrolysis of ATP in the presence of single-stranded DNA, the ATP-dependent uptake of single-stranded DNA by duplex DNA, and the ATP-dependent hybridization of homologous single-stranded DNAs. It interacts with LexA causing its activation and leading to its autocatalytic cleavage. The sequence is that of Protein RecA from Bordetella avium (strain 197N).